We begin with the raw amino-acid sequence, 313 residues long: Pseudouridine-5'-phosphate glycosidase (313 aa).

Glu34 serves as the catalytic Proton donor. The substrate site is built by Lys95 and Val115. Asp147 is a binding site for Mn(2+). Ser149–Asp151 provides a ligand contact to substrate. Lys168 (nucleophile) is an active-site residue.

This sequence belongs to the pseudouridine-5'-phosphate glycosidase family. As to quaternary structure, homotrimer. It depends on Mn(2+) as a cofactor.

It carries out the reaction D-ribose 5-phosphate + uracil = psi-UMP + H2O. Catalyzes the reversible cleavage of pseudouridine 5'-phosphate (PsiMP) to ribose 5-phosphate and uracil. Functions biologically in the cleavage direction, as part of a pseudouridine degradation pathway. The chain is Pseudouridine-5'-phosphate glycosidase from Deinococcus radiodurans (strain ATCC 13939 / DSM 20539 / JCM 16871 / CCUG 27074 / LMG 4051 / NBRC 15346 / NCIMB 9279 / VKM B-1422 / R1).